The primary structure comprises 594 residues: UvrABC system protein C (594 aa).

In terms of domain architecture, GIY-YIG spans 14-91; that stretch reads DQPGCYLMKD…IKKHDPKYNI (78 aa). The region spanning 196 to 231 is the UVR domain; sequence KEVRSELETKMYEASEKLEFERAKELRDQIAHIDAI.

Belongs to the UvrC family. As to quaternary structure, interacts with UvrB in an incision complex.

The protein localises to the cytoplasm. Its function is as follows. The UvrABC repair system catalyzes the recognition and processing of DNA lesions. UvrC both incises the 5' and 3' sides of the lesion. The N-terminal half is responsible for the 3' incision and the C-terminal half is responsible for the 5' incision. This Bacillus thuringiensis (strain Al Hakam) protein is UvrABC system protein C.